We begin with the raw amino-acid sequence, 208 residues long: Uracil phosphoribosyltransferase (208 aa).

Residues arginine 78, arginine 103, and 130 to 138 each bind 5-phospho-alpha-D-ribose 1-diphosphate; that span reads DPMLATGGS. Residues isoleucine 193 and 198–200 contribute to the uracil site; that span reads GDA. Position 199 (aspartate 199) interacts with 5-phospho-alpha-D-ribose 1-diphosphate.

The protein belongs to the UPRTase family. Mg(2+) serves as cofactor.

The enzyme catalyses UMP + diphosphate = 5-phospho-alpha-D-ribose 1-diphosphate + uracil. The protein operates within pyrimidine metabolism; UMP biosynthesis via salvage pathway; UMP from uracil: step 1/1. Its activity is regulated as follows. Allosterically activated by GTP. Functionally, catalyzes the conversion of uracil and 5-phospho-alpha-D-ribose 1-diphosphate (PRPP) to UMP and diphosphate. This Trichlorobacter lovleyi (strain ATCC BAA-1151 / DSM 17278 / SZ) (Geobacter lovleyi) protein is Uracil phosphoribosyltransferase.